The primary structure comprises 179 residues: Inner membrane-spanning protein YciB (179 aa).

The next 5 helical transmembrane spans lie at 22–42 (IYAA…YSWV), 50–70 (MALI…FFHN), 76–96 (WKVT…QWVM), 121–141 (LAWA…AFWL), and 149–169 (FKVF…GIYI).

This sequence belongs to the YciB family.

The protein resides in the cell inner membrane. Functionally, plays a role in cell envelope biogenesis, maintenance of cell envelope integrity and membrane homeostasis. The polypeptide is Inner membrane-spanning protein YciB (Shigella dysenteriae serotype 1 (strain Sd197)).